The chain runs to 190 residues: B3 domain-containing protein At1g49475 (190 aa).

Residues 1–27 (MRNMHTNRRSPGPITSAATQRRLKPEP) are disordered. Positions 33 to 125 (KFIKIILLSR…CFRVVIFDVS (93 aa)) form a DNA-binding region, TF-B3.

It is found in the nucleus. This is B3 domain-containing protein At1g49475 from Arabidopsis thaliana (Mouse-ear cress).